The following is a 192-amino-acid chain: Signal peptidase complex catalytic subunit SEC11C (192 aa).

The Cytoplasmic segment spans residues M1–R28. Residues Q29–W48 traverse the membrane as a helical; Signal-anchor for type II membrane protein segment. Residues K49–S192 lie on the Lumenal side of the membrane. Catalysis depends on charge relay system residues S68, H108, and D134. The tract at residues A177–L188 is C-terminal short (CTS) helix.

This sequence belongs to the peptidase S26B family. Component of the signal peptidase complex paralog C (SPC-C) composed of a catalytic subunit SEC11C and three accessory subunits SPCS1, SPCS2 and SPCS3. Within the complex, interacts with SPCS2 and SPCS3. The complex induces a local thinning of the ER membrane which is used to measure the length of the signal peptide (SP) h-region of protein substrates. This ensures the selectivity of the complex towards h-regions shorter than 18-20 amino acids. In terms of processing, may undergo processing at the N-terminus.

The protein resides in the endoplasmic reticulum membrane. The enzyme catalyses Cleavage of hydrophobic, N-terminal signal or leader sequences from secreted and periplasmic proteins.. Its function is as follows. Catalytic component of the signal peptidase complex (SPC) which catalyzes the cleavage of N-terminal signal sequences from nascent proteins as they are translocated into the lumen of the endoplasmic reticulum. Specifically cleaves N-terminal signal peptides that contain a hydrophobic alpha-helix (h-region) shorter than 18-20 amino acids. The protein is Signal peptidase complex catalytic subunit SEC11C (SEC11C) of Homo sapiens (Human).